Consider the following 309-residue polypeptide: Minor serine/threonine-protein phosphatase PP2A-1 catalytic subunit (309 aa).

Positions 57, 59, 85, and 117 each coordinate Mn(2+). His118 serves as the catalytic Proton donor. Mn(2+) contacts are provided by His167 and His241. Leu309 is modified (leucine methyl ester).

Belongs to the PPP phosphatase family. PP-2A subfamily. Requires Mn(2+) as cofactor.

The catalysed reaction is O-phospho-L-seryl-[protein] + H2O = L-seryl-[protein] + phosphate. The enzyme catalyses O-phospho-L-threonyl-[protein] + H2O = L-threonyl-[protein] + phosphate. Essential role in cell cycle control. PP2A may be involved in controlling the entry into mitosis, possibly acting as an inhibitor. The polypeptide is Minor serine/threonine-protein phosphatase PP2A-1 catalytic subunit (ppa1) (Schizosaccharomyces pombe (strain 972 / ATCC 24843) (Fission yeast)).